We begin with the raw amino-acid sequence, 185 residues long: Ribosome-recycling factor (185 aa).

The protein belongs to the RRF family.

The protein resides in the cytoplasm. In terms of biological role, responsible for the release of ribosomes from messenger RNA at the termination of protein biosynthesis. May increase the efficiency of translation by recycling ribosomes from one round of translation to another. The sequence is that of Ribosome-recycling factor from Clostridium beijerinckii (strain ATCC 51743 / NCIMB 8052) (Clostridium acetobutylicum).